The primary structure comprises 27 residues: Trypsin inhibitor 1 (27 aa).

As to quaternary structure, homodimer. In terms of processing, contains disulfide bonds. Post-translationally, glycosylated.

Inhibits trypsin (IC(50)=1.25 uM) but not chymotrypsin or papain. Has antibacterial activity against S.enterica ATCC 10708 (MIC=5 ug/ml) and S.aureus ATCC 25923 (MIC=5 ug/ml) but not against B.subtilis ATCC 6633 or P.aeruginosa ATCC 25619. Has no hemolytic activity against human erythrocytes. Is not toxic to mice. The polypeptide is Trypsin inhibitor 1 (Jatropha curcas (Barbados nut)).